The primary structure comprises 99 residues: DNA-binding protein HU (99 aa).

The tract at residues 63 to 82 (HRKEREGRNPKTGAKMKIDA) is disordered.

It belongs to the bacterial histone-like protein family. In terms of assembly, homodimer.

In terms of biological role, histone-like DNA-binding protein which is capable of wrapping DNA to stabilize it, and thus to prevent its denaturation under extreme environmental conditions. This Rickettsia prowazekii (strain Madrid E) protein is DNA-binding protein HU (hup).